A 474-amino-acid chain; its full sequence is Tocopherol cyclase, chloroplastic (474 aa).

A chloroplast-targeting transit peptide spans 1–65; that stretch reads MNLAVAAALP…TPTPQDRSLR (65 aa).

Present in all green tissues, both in bundle sheath and in mesophyll cells.

It localises to the plastid. The protein resides in the chloroplast. The catalysed reaction is gamma-tocopherol = 2,3-dimethyl-6-phytylbenzene-1,4-diol. It participates in cofactor biosynthesis; tocopherol biosynthesis. Its function is as follows. Involved in the synthesis of tocopherols (vitamin E), which presumably protect photosynthetic complexes from oxidative stress. Catalyzes the conversion of 2,3-dimethyl-5-phytyl-1,4-hydroquinone (DMPQ) to gamma-tocopherol. The protein is Tocopherol cyclase, chloroplastic of Zea mays (Maize).